The sequence spans 490 residues: Hippocampus abundant transcript 1 protein (490 aa).

An N-acetylmethionine modification is found at Met-1. Over Met-1–Ala-40 the chain is Extracellular. Asn-12 carries N-linked (GlcNAc...) asparagine glycosylation. Residues Val-41 to Val-61 form a helical membrane-spanning segment. Topologically, residues Leu-62 to Asn-74 are cytoplasmic. Residues Gly-75–Leu-95 form a helical membrane-spanning segment. Topologically, residues Ser-96–Ser-103 are extracellular. Residues Phe-104 to Trp-124 traverse the membrane as a helical segment. The Cytoplasmic segment spans residues Trp-125–Tyr-126. Residues Phe-127–Val-147 form a helical membrane-spanning segment. Residues Ala-148–Tyr-160 are Extracellular-facing. A helical transmembrane segment spans residues Gly-161–Leu-181. The Cytoplasmic portion of the chain corresponds to Gly-182–Ser-188. The chain crosses the membrane as a helical span at residues Leu-189–Val-209. Residues Pro-210–Asp-243 lie on the Extracellular side of the membrane. Residues Ser-244–Tyr-264 form a helical membrane-spanning segment. Topologically, residues Ser-265–Ala-284 are cytoplasmic. Residues Phe-285–Met-305 form a helical membrane-spanning segment. At Arg-306–Thr-313 the chain is on the extracellular side. The chain crosses the membrane as a helical span at residues Ile-314–Pro-334. Residues Trp-335–Met-337 are Cytoplasmic-facing. Residues Trp-338–Val-358 traverse the membrane as a helical segment. Topologically, residues Ser-359–Gly-379 are extracellular. A helical membrane pass occupies residues Leu-380–Leu-400. The Cytoplasmic segment spans residues Lys-401–Pro-427. Residues Gly-428–Ile-448 traverse the membrane as a helical segment. Over Pro-449 to Val-490 the chain is Extracellular. N-linked (GlcNAc...) asparagine glycosylation is present at Asn-453. The tract at residues Gly-466–Val-490 is disordered.

Belongs to the major facilitator superfamily. Expressed in various tissues.

Its subcellular location is the membrane. The chain is Hippocampus abundant transcript 1 protein from Mus musculus (Mouse).